Consider the following 311-residue polypeptide: Ribosomal RNA small subunit methyltransferase H (311 aa).

S-adenosyl-L-methionine is bound by residues 32-34 (GGH), D52, F78, D99, and Q106.

Belongs to the methyltransferase superfamily. RsmH family.

It localises to the cytoplasm. It carries out the reaction cytidine(1402) in 16S rRNA + S-adenosyl-L-methionine = N(4)-methylcytidine(1402) in 16S rRNA + S-adenosyl-L-homocysteine + H(+). Specifically methylates the N4 position of cytidine in position 1402 (C1402) of 16S rRNA. This Halothermothrix orenii (strain H 168 / OCM 544 / DSM 9562) protein is Ribosomal RNA small subunit methyltransferase H.